The chain runs to 340 residues: MGEMEQLRQEAEQLKKQIADARKACADVTLAELVSGLEVVGRVQMRTRRTLRGHLAKIYAMHWATDSKLLVSASQDGKLIVWDSYTTNKVHAIPLRSSWVMTCAYAPSGNFVACGGLDNMCSIYNLKSREGNVKVSRELSAHTGYLSCCRFLDDNNIVTSSGDTTCALWDIETGQQKTVFVGHTGDCMSLAVSPDFNLFISGACDASAKLWDVREGTCRQTFTGHESDINAICFFPNGEAICTGSDDASCRLFDLRADQELICFSHESIICGITSVAFSLSGRLLFAGYDDFNCNVWDSMKSERVGILSGHDNRVSCLGVTADGMAVATGSWDSFLKIWN.

WD repeat units follow at residues 53-83 (GHLAKIYAMHWATDSKLLVSASQDGKLIVWD), 95-125 (LRSSWVMTCAYAPSGNFVACGGLDNMCSIYN), 141-170 (AHTGYLSCCRFLDDNNIVTSSGDTTCALWD), 182-212 (GHTGDCMSLAVSPDFNLFISGACDASAKLWD), 224-254 (GHESDINAICFFPNGEAICTGSDDASCRLFD), 268-298 (SIICGITSVAFSLSGRLLFAGYDDFNCNVWD), and 310-340 (GHDNRVSCLGVTADGMAVATGSWDSFLKIWN).

This sequence belongs to the WD repeat G protein beta family. In terms of assembly, g proteins are composed of 3 units, alpha, beta and gamma. Interacts with RASD2.

Guanine nucleotide-binding proteins (G proteins) are involved as a modulator or transducer in various transmembrane signaling systems. The beta and gamma chains are required for the GTPase activity, for replacement of GDP by GTP, and for G protein-effector interaction. This chain is Guanine nucleotide-binding protein G(I)/G(S)/G(T) subunit beta-3 (GNB3), found in Homo sapiens (Human).